A 372-amino-acid chain; its full sequence is Cytochrome b (372 aa).

4 helical membrane passes run 25-45 (FGSMLLTCSALQIMTGFFLSM), 69-90 (WMMQNLHAIGASMFFICVYIHV), 105-125 (WLSGTTLLIMLMATAFFGYVL), and 170-190 (FFALHFILPFGIISLSSLHIM). Heme b is bound by residues H75 and H89. Residues H174 and H188 each coordinate heme b. H193 is an a ubiquinone binding site. The next 4 membrane-spanning stretches (helical) occupy residues 218 to 238 (YKDLFMISSMIMIMLLTISFI), 280 to 300 (LGGALALAMSIMILLTVPFTH), 312 to 332 (FMQLMFWTLVATFMIITWTAT), and 339 to 358 (YTMISQVTSSLYFMFFMSNP).

This sequence belongs to the cytochrome b family. As to quaternary structure, the cytochrome bc1 complex contains 3 respiratory subunits (MT-CYB, CYC1 and UQCRFS1), 2 core proteins (UQCRC1 and UQCRC2) and probably 6 low-molecular weight proteins. Heme b is required as a cofactor.

Its subcellular location is the mitochondrion inner membrane. Its function is as follows. Component of the ubiquinol-cytochrome c reductase complex (complex III or cytochrome b-c1 complex) that is part of the mitochondrial respiratory chain. The b-c1 complex mediates electron transfer from ubiquinol to cytochrome c. Contributes to the generation of a proton gradient across the mitochondrial membrane that is then used for ATP synthesis. The protein is Cytochrome b (MT-CYB) of Acrantophis madagascariensis (Madagascar ground boa).